Consider the following 389-residue polypeptide: Xylose isomerase (389 aa).

Active-site residues include His-101 and Asp-104. Mg(2+)-binding residues include Glu-232, Glu-268, His-271, Asp-296, Asp-307, and Asp-309.

This sequence belongs to the xylose isomerase family. In terms of assembly, homotetramer. It depends on Mg(2+) as a cofactor.

It localises to the cytoplasm. It catalyses the reaction alpha-D-xylose = alpha-D-xylulofuranose. This Lactococcus lactis subsp. cremoris (strain SK11) protein is Xylose isomerase.